A 212-amino-acid polypeptide reads, in one-letter code: ATP-dependent Clp protease proteolytic subunit (212 aa).

The Nucleophile role is filled by serine 112. Histidine 137 is a catalytic residue.

This sequence belongs to the peptidase S14 family. In terms of assembly, fourteen ClpP subunits assemble into 2 heptameric rings which stack back to back to give a disk-like structure with a central cavity, resembling the structure of eukaryotic proteasomes.

Its subcellular location is the cytoplasm. It carries out the reaction Hydrolysis of proteins to small peptides in the presence of ATP and magnesium. alpha-casein is the usual test substrate. In the absence of ATP, only oligopeptides shorter than five residues are hydrolyzed (such as succinyl-Leu-Tyr-|-NHMec, and Leu-Tyr-Leu-|-Tyr-Trp, in which cleavage of the -Tyr-|-Leu- and -Tyr-|-Trp bonds also occurs).. In terms of biological role, cleaves peptides in various proteins in a process that requires ATP hydrolysis. Has a chymotrypsin-like activity. Plays a major role in the degradation of misfolded proteins. This Thiobacillus denitrificans (strain ATCC 25259 / T1) protein is ATP-dependent Clp protease proteolytic subunit.